Reading from the N-terminus, the 108-residue chain is MADPRLRQIKIKTGVVKRLAKEKVMYEKEAKQQEEKIEKMKAEACDDYGIKKQAEILQESRMMIPDCQRRLEIAHADLTQLLENEKELEEAEEYKEARSILESVKLEA.

An N-acetylalanine modification is found at A2.

This sequence belongs to the TBCA family. In terms of assembly, supercomplex made of cofactors A to E. Cofactors A and D function by capturing and stabilizing tubulin in a quasi-native conformation. Cofactor E binds to the cofactor D-tubulin complex; interaction with cofactor C then causes the release of tubulin polypeptides that are committed to the native state.

Its subcellular location is the cytoplasm. It localises to the cytoskeleton. Functionally, tubulin-folding protein; involved in the early step of the tubulin folding pathway. The protein is Tubulin-specific chaperone A (TBCA) of Gallus gallus (Chicken).